The chain runs to 125 residues: QQANDVRATYHYYRPAQNNWDLGAPAVSAYCATWDASKPLSWRSKYGWTAFCGPAGPRGQAACGKCLRVTNPATGAQITARIVDQCANGGLDLDWDTVFTKIDTNGIGYQQGHLNVNYQFVDCRD.

The residue at position 1 (Gln-1) is a Pyrrolidone carboxylic acid. The Barwin domain occupies 1–125 (QQANDVRATY…VNYQFVDCRD (125 aa)). 3 cysteine pairs are disulfide-bonded: Cys-31–Cys-63, Cys-52–Cys-86, and Cys-66–Cys-123.

May be involved in a defense mechanism. Probable plant lectin. Binds weakly a chitin analog. The sequence is that of Barwin from Hordeum vulgare (Barley).